A 289-amino-acid chain; its full sequence is Glucosamine-6-phosphate deaminase 1 (289 aa).

Residue Lys-64 is modified to N6-acetyllysine. Catalysis depends on Asp-72, which acts as the Proton acceptor; for enolization step. Asp-141 functions as the For ring-opening step in the catalytic mechanism. Catalysis depends on His-143, which acts as the Proton acceptor; for ring-opening step. Glu-148 acts as the For ring-opening step in catalysis. Thr-161 is subject to Phosphothreonine.

This sequence belongs to the glucosamine/galactosamine-6-phosphate isomerase family. As to quaternary structure, homohexamer.

The protein localises to the cytoplasm. It carries out the reaction alpha-D-glucosamine 6-phosphate + H2O = beta-D-fructose 6-phosphate + NH4(+). It functions in the pathway nucleotide-sugar biosynthesis; UDP-N-acetyl-alpha-D-glucosamine biosynthesis; alpha-D-glucosamine 6-phosphate from D-fructose 6-phosphate: step 1/1. With respect to regulation, allosterically activated by N-acetylglucosamine-6-phosphate (GlcNAc6P). Catalyzes the reversible conversion of alpha-D-glucosamine 6-phosphate (GlcN-6P) into beta-D-fructose 6-phosphate (Fru-6P) and ammonium ion, a regulatory reaction step in de novo uridine diphosphate-N-acetyl-alpha-D-glucosamine (UDP-GlcNAc) biosynthesis via hexosamine pathway. Deamination is coupled to aldo-keto isomerization mediating the metabolic flux from UDP-GlcNAc toward Fru-6P. At high ammonium level can drive amination and isomerization of Fru-6P toward hexosamines and UDP-GlcNAc synthesis. Has a role in fine tuning the metabolic fluctuations of cytosolic UDP-GlcNAc and their effects on hyaluronan synthesis that occur during tissue remodeling. Seems to trigger calcium oscillations in mammalian eggs. These oscillations serve as the essential trigger for egg activation and early development of the embryo. The protein is Glucosamine-6-phosphate deaminase 1 of Homo sapiens (Human).